A 1780-amino-acid polypeptide reads, in one-letter code: Callose synthase 12 (1780 aa).

Over 1-302 (MSLRHRTVPP…ERRTFFYLYR (302 aa)) the chain is Cytoplasmic. A helical transmembrane segment spans residues 303-323 (SFDRLWVMLALFLQAAIIVAW). The Extracellular segment spans residues 324 to 348 (EEKPDTSSVTRQLWNALKARDVQVR). The helical transmembrane segment at 349-369 (LLTVFLTWSGMRLLQAVLDAA) threads the bilayer. At 370–386 (SQYPLVSRETKRHFFRM) the chain is on the cytoplasmic side. Residues 387-407 (LMKVIAAAVWIVAFTVLYTNI) traverse the membrane as a helical segment. Residues 408 to 427 (WKQKRQDRQWSNAATTKIYQ) lie on the Extracellular side of the membrane. The helical transmembrane segment at 428-448 (FLYAVGAFLVPEILALALFII) threads the bilayer. The Cytoplasmic segment spans residues 449–489 (PWMRNFLEETNWKIFFALTWWFQGKSFVGRGLREGLVDNIK). A helical membrane pass occupies residues 490 to 510 (YSTFWIFVLATKFTFSYFLQV). Over 511–542 (KPMIKPSKLLWNLKDVDYEWHQFYGDSNRFSV) the chain is Extracellular. The chain crosses the membrane as a helical span at residues 543–563 (ALLWLPVVLIYLMDIQIWYAI). Residues 564–1348 (YSSIVGAVVG…FFRMLSFFYT (785 aa)) lie on the Cytoplasmic side of the membrane. The helical transmembrane segment at 1349–1369 (TVGFFFNTMMVILTVYAFLWG) threads the bilayer. At 1370 to 1394 (RVYLALSGVEKSALADSTDTNAALG) the chain is on the extracellular side. The chain crosses the membrane as a helical span at residues 1395 to 1415 (VILNQQFIIQLGLFTALPMIV). The Cytoplasmic segment spans residues 1416–1421 (EWSLEE). A helical membrane pass occupies residues 1422 to 1442 (GFLLAIWNFIRMQIQLSAVFY). Residues 1443–1489 (TFSMGTRAHYFGRTILHGGAKYRATGRGFVVEHKGFTENYRLYARSH) are Extracellular-facing. The helical transmembrane segment at 1490–1510 (FVKAIELGLILIVYASHSPIA) threads the bilayer. At 1511–1516 (KDSLIY) the chain is on the cytoplasmic side. Residues 1517-1537 (IAMTITSWFLVISWIMAPFVF) form a helical membrane-spanning segment. Over 1538–1588 (NPSGFDWLKTVYDFEDFMNWIWYQGRISTKSEQSWEKWWYEEQDHLRNTGK) the chain is Extracellular. Residues 1589–1609 (AGLFVEIILVLRFFFFQYGIV) traverse the membrane as a helical segment. Topologically, residues 1610 to 1620 (YQLKIANGSTS) are cytoplasmic. The chain crosses the membrane as a helical span at residues 1621 to 1641 (LFVYLFSWIYIFAIFVLFLVI). At 1642–1657 (QYARDKYSAKAHIRYR) the chain is on the extracellular side. A helical transmembrane segment spans residues 1658–1678 (LVQFLLIVLAILVIVALLEFT). The Cytoplasmic portion of the chain corresponds to 1679–1681 (HFS). Residues 1682–1702 (FIDIFTSLLAFIPTGWGILLI) traverse the membrane as a helical segment. The Extracellular segment spans residues 1703–1728 (AQTQRKWLKNYTIFWNAVVSVARMYD). N-linked (GlcNAc...) asparagine glycosylation occurs at Asn-1712. A helical transmembrane segment spans residues 1729–1749 (ILFGILIMVPVAFLSWMPGFQ). Topologically, residues 1750–1780 (SMQTRILFNEAFSRGLRIMQIVTGKKSKGDV) are cytoplasmic.

It belongs to the glycosyltransferase 48 family. As to expression, highly expressed in flowers. Expressed at low levels in roots, leaves, stems, cauline leaves and siliques.

It is found in the cell membrane. The enzyme catalyses [(1-&gt;3)-beta-D-glucosyl](n) + UDP-alpha-D-glucose = [(1-&gt;3)-beta-D-glucosyl](n+1) + UDP + H(+). In terms of biological role, involved in sporophytic and gametophytic development. Required for normal leaf development. During pollen formation, required for the formation of the callose wall separating the tetraspores of the tetrad (interstitial wall), but not for the callose wall surrounding the pollen mother cells (peripheral wall). Functionally redudant to CALS11 (GSL1). May play a role later in pollen grain maturation. Required for callose formation induced by wounding and pathogen attack. May interfere with salicylic acid-induced signaling pathway during defense response. During plant growth and development, callose is found as a transitory component of the cell plate in dividing cells, is a major component of pollen mother cell walls and pollen tubes, and is found as a structural component of plasmodesmatal canals. The protein is Callose synthase 12 (CALS12) of Arabidopsis thaliana (Mouse-ear cress).